A 130-amino-acid chain; its full sequence is Mini-ribonuclease 3 (130 aa).

Residue Asp19 is part of the active site. The disordered stretch occupies residues 69–91; the sequence is EQDVVRRGRNAKGHGAPKSADPA.

The protein belongs to the MrnC RNase family. In terms of assembly, homodimer. Mg(2+) serves as cofactor.

The protein localises to the cytoplasm. Its function is as follows. Involved in correct processing of both the 5' and 3' ends of 23S rRNA precursor. Processes 30S rRNA precursor transcript even in absence of ribonuclease 3 (Rnc); Rnc processes 30S rRNA into smaller rRNA precursors. This chain is Mini-ribonuclease 3, found in Symbiobacterium thermophilum (strain DSM 24528 / JCM 14929 / IAM 14863 / T).